The primary structure comprises 1267 residues: Probable ATP-dependent RNA helicase DHR1 (1267 aa).

3 disordered regions span residues Met1–Thr67, Tyr168–Lys233, and Glu255–Asp313. Basic and acidic residues-rich tracts occupy residues Arg7–Arg25 and Thr32–Asn43. The span at Glu175–Glu192 shows a compositional bias: acidic residues. Ser181 carries the post-translational modification Phosphoserine. Positions Thr202–Pro217 are enriched in basic and acidic residues. Over residues Asp264–Glu284 the composition is skewed to acidic residues. The 180-residue stretch at Met401–Val580 folds into the Helicase ATP-binding domain. Residue Gly414–Thr421 participates in ATP binding. The DEAH box signature appears at Asp516–His519. The Helicase C-terminal domain occupies Asp675–Ala858. Disordered stretches follow at residues Arg693–Thr720 and Pro955–Asp976. Positions Glu695–Leu719 are enriched in acidic residues.

Belongs to the DEAD box helicase family. DEAH subfamily. In terms of assembly, interacts with snoRNA U3. Component of the ribosomal small subunit (SSU) processome composed of at least 40 protein subunits and snoRNA U3.

It is found in the nucleus. The protein localises to the nucleolus. The catalysed reaction is ATP + H2O = ADP + phosphate + H(+). Its function is as follows. Probable ATP-binding RNA helicase. Required for 18S rRNA synthesis. May play a role in restructuring of the pre-rRNA. The protein is Probable ATP-dependent RNA helicase DHR1 (ECM16) of Saccharomyces cerevisiae (strain ATCC 204508 / S288c) (Baker's yeast).